The following is a 297-amino-acid chain: Thoeris protein ThsA (297 aa).

Helical transmembrane passes span 32–52 (ALSI…FLDL) and 57–77 (RLII…VQFI).

It is found in the cell membrane. Its activity is regulated as follows. Activated by a signal molecule generated by ThsB. Functionally, probable membrane protein component of the Thoeris antiviral defense system, composed of ThsA and ThsB. Expression of ThsA and ThsB in B.subtilis (strain BEST7003) confers resistance to phages SBSphiC, SBSphiJ and SPO1. Activation by a signal generated by ThsB leads to phage resistance. The protein is Thoeris protein ThsA of Bacillus amyloliquefaciens (strain Y2) (Bacillus amyloliquefaciens subsp. plantarum (strain B9601-Y2)).